The sequence spans 92 residues: Protein 10 (92 aa).

Residues 18–29 (FMQKYDKNSDQH) form the EF-hand domain.

The protein belongs to the calbindin family. Brain.

The polypeptide is Protein 10 (Cavia porcellus (Guinea pig)).